Consider the following 263-residue polypeptide: HTH-type transcriptional regulator KdgR (263 aa).

The 62-residue stretch at 13–74 (VSSVLKVFGI…GESEKYSLTL (62 aa)) folds into the HTH iclR-type domain. The segment at residues 34–53 (ITELSQRVMMSKSTVYRFLQ) is a DNA-binding region (H-T-H motif). Positions 89-258 (LIRSADIQMR…ARKISAQMGY (170 aa)) constitute an IclR-ED domain.

The protein localises to the cytoplasm. Functionally, transcriptional repressor that negatively regulates the expression of kdgT, kdgK and kdgA, which encode proteins involved in transport and catabolism of 2-keto-3-deoxygluconate (KDG). Also represses expression of eda, which encodes the Entner-Doudoroff aldolase, by binding to its P2 promoter region. This is HTH-type transcriptional regulator KdgR from Escherichia coli (strain K12).